A 518-amino-acid chain; its full sequence is GTPase MTG2, mitochondrial (518 aa).

The N-terminal 23 residues, 1–23 (MSIAWSSVFKRELRLERFLPRVY), are a transit peptide targeting the mitochondrion. The 251-residue stretch at 89–339 (GNFVDVRIVK…QHFLFELKSI (251 aa)) folds into the Obg domain. In terms of domain architecture, OBG-type G spans 340-512 (ADLGLIGLPN…LKKKMFKCAR (173 aa)). GTP contacts are provided by residues 346–353 (GLPNAGKS), 394–398 (DIPGI), and 460–463 (NKVD).

This sequence belongs to the TRAFAC class OBG-HflX-like GTPase superfamily. OBG GTPase family. In terms of assembly, interacts with the mitochondrial 54S large ribosomal subunit.

It localises to the mitochondrion inner membrane. Required for mitochondrial protein synthesis. May be involved in mitochondrial ribosome biogenesis. This is GTPase MTG2, mitochondrial (MTG2) from Saccharomyces cerevisiae (strain ATCC 204508 / S288c) (Baker's yeast).